A 356-amino-acid chain; its full sequence is Carbohydrate sulfotransferase 10 (356 aa).

The Cytoplasmic portion of the chain corresponds to 1-6; the sequence is MHHQWL. The helical; Signal-anchor for type II membrane protein transmembrane segment at 7-27 threads the bilayer; the sequence is LLAACFWVIFMFMVASKFITL. Over 28–356 the chain is Lumenal; it reads TFKDPDGYSA…GYQKPDFLLN (329 aa). N-linked (GlcNAc...) asparagine glycosylation is present at N99. 3'-phosphoadenylyl sulfate is bound by residues 127 to 133 and 189 to 197; these read PKVGNTQ and RDPFERLIS. N228 and N316 each carry an N-linked (GlcNAc...) asparagine glycan.

It belongs to the sulfotransferase 2 family. In terms of tissue distribution, in myogenic progenitors, it is ubiquitously expressed.

It is found in the golgi apparatus membrane. The enzyme catalyses 3-O-{beta-D-GlcA-(1-&gt;[3)-alpha-D-Xyl-(1-&gt;3)-beta-D-GlcA-(1-&gt;](n)-4)-beta-D-Xyl-(1-&gt;4)-Rib-ol-P-Rib-ol-P-3-beta-D-GalNAc-(1-&gt;3)-beta-D-GlcNAc-(1-&gt;4)-O-6-P-alpha-D-Man}-L-Thr-[protein] + 3'-phosphoadenylyl sulfate = 3-O-{O-3-S-beta-D-GlcA-(1-&gt;[3)-alpha-D-Xyl-(1-&gt;3)-beta-D-GlcA-(1-&gt;](n)-4)-beta-D-Xyl-(1-&gt;4)-Rib-ol-P-Rib-ol-P-3-beta-D-GalNAc-(1-&gt;3)-beta-D-GlcNAc-(1-&gt;4)-O-6-P-alpha-D-Man}-L-Thr-[protein] + adenosine 3',5'-bisphosphate + H(+). It catalyses the reaction 17beta-estradiol 3-O-(beta-D-glucuronate) + 3'-phosphoadenylyl sulfate = 17beta-estradiol 3-O-(3-sulfo-beta-D-glucuronate) + adenosine 3',5'-bisphosphate + H(+). It carries out the reaction 17beta-estradiol 3-O-(beta-D-glucuronate) 17-sulfate + 3'-phosphoadenylyl sulfate = 17beta-estradiol 3-O-(3-sulfo-beta-D-glucuronate) 17-sulfate + adenosine 3',5'-bisphosphate + H(+). The catalysed reaction is 17beta-estradiol 17-O-(beta-D-glucuronate) + 3'-phosphoadenylyl sulfate = 17beta-estradiol 17-O-(3-sulfo-beta-D-glucuronate) + adenosine 3',5'-bisphosphate + H(+). The enzyme catalyses 16alpha,17beta-estriol 3-O-(beta-D-glucuronate) + 3'-phosphoadenylyl sulfate = 16alpha,17beta-estriol 3-O-(3-sulfo-beta-D-glucuronate) + adenosine 3',5'-bisphosphate + H(+). It catalyses the reaction 16alpha,17beta-estriol 16-O-(beta-D-glucuronate) + 3'-phosphoadenylyl sulfate = 16alpha,17beta-estriol 16-O-(3-sulfo-beta-D-glucuronate) + adenosine 3',5'-bisphosphate + H(+). It carries out the reaction 16alpha,17beta-estriol 17-O-(beta-D-glucuronate) + 3'-phosphoadenylyl sulfate = 16alpha,17beta-estriol 17-O-(3-sulfo-beta-D-glucuronate) + adenosine 3',5'-bisphosphate + H(+). The catalysed reaction is estrone 3-O-(beta-D-glucuronate) + 3'-phosphoadenylyl sulfate = estrone 3-O-(3-sulfo-beta-D-glucuronate) + adenosine 3',5'-bisphosphate + H(+). The enzyme catalyses 3alpha,20alpha-dihydroxy-5beta-pregnane 3-O-(beta-D-glucuronate) + 3'-phosphoadenylyl sulfate = 3alpha,20alpha-dihydroxy-5beta-pregnane 3-O-(3-sulfo-beta-D-glucuronate) + adenosine 3',5'-bisphosphate + H(+). It catalyses the reaction testosterone 17-O-(beta-D-glucuronate) + 3'-phosphoadenylyl sulfate = testosterone 17-O-(3-sulfo-beta-D-glucuronate) + adenosine 3',5'-bisphosphate + H(+). It carries out the reaction 3beta-androst-5-en-17-one 3-O-(beta-D-glucuronate) + 3'-phosphoadenylyl sulfate = 3beta-androst-5-en-17-one 3-O-(3-sulfo-beta-D-glucuronate) + adenosine 3',5'-bisphosphate + H(+). The catalysed reaction is 3alpha,17alpha-dihydroxy-5beta-androstane-11-one-17beta-carboxylate 3-O-(beta-D-glucuronate) + 3'-phosphoadenylyl sulfate = 3alpha,17alpha-dihydroxy-5beta-androstane-11-one-17beta-carboxylate 3-O-(3-sulfo-beta-D-glucuronate) + adenosine 3',5'-bisphosphate + H(+). The enzyme catalyses 3alpha-hydroxyetiocholan-17-one 3-O-(beta-D-glucuronate) + 3'-phosphoadenylyl sulfate = 3alpha-hydroxyetiocholan-17-one 3-O-(3-sulfo-beta-D-glucuronate) + adenosine 3',5'-bisphosphate + H(+). The protein operates within steroid metabolism. It participates in protein modification; carbohydrate sulfation. Its function is as follows. Catalyzes the transfer of sulfate from 3'-phosphoadenylyl sulfate (PAPS) to position 3 of terminal glucuronic acid of both protein- and lipid-linked oligosaccharides. Participates in biosynthesis of HNK-1 carbohydrate structure 3-O-sulfo-beta-D-GlcA-(1-&gt;3)-beta-D-Gal-(1-&gt;4)-D-GlcNAc-R, a sulfated glucuronyl-lactosaminyl residue carried by many neural recognition molecules, which is involved in cell interactions during ontogenetic development and in synaptic plasticity in the adult. May be indirectly involved in synapse plasticity of the hippocampus, via its role in HNK-1 biosynthesis. Sulfates terminal glucuronyl residue of the laminin globular (LG)-domain binding epitope on DAG1/alpha-dystroglycan and prevents further polymerization by LARGE1 glycosyltransferase. Likely defines the chain length of LG epitope, conferring binding specificity to extracellular matrix components. Plays a role in down-regulating the steroid hormones. Sulfates glucuronidated estrogens and androgens with an impact in hormone cycle and fertility. Has a preference for glucuronyl moiety at the 3-hydroxyl group of a sterol ring rather than the 17-hydroxyl group, showing high catalytic efficiency for 17beta-estradiol 3-O-(beta-D-glucuronate) and dehydroepiandrosterone 3-O-(beta-D-glucuronate) hormones. This chain is Carbohydrate sulfotransferase 10 (Chst10), found in Rattus norvegicus (Rat).